The following is a 253-amino-acid chain: Ethylene-responsive transcription factor RAP2-11 (253 aa).

Positions Lys-21–Ala-78 form a DNA-binding region, AP2/ERF.

Belongs to the AP2/ERF transcription factor family. ERF subfamily.

It localises to the nucleus. Functionally, probably acts as a transcriptional activator. Binds to the GCC-box pathogenesis-related promoter element. May be involved in the regulation of gene expression by stress factors and by components of stress signal transduction pathways. The sequence is that of Ethylene-responsive transcription factor RAP2-11 (RAP2-11) from Arabidopsis thaliana (Mouse-ear cress).